Here is a 501-residue protein sequence, read N- to C-terminus: 2,3-bisphosphoglycerate-independent phosphoglycerate mutase (501 aa).

Residues Asp-12 and Ser-62 each contribute to the Mn(2+) site. Ser-62 acts as the Phosphoserine intermediate in catalysis. Substrate is bound by residues His-121, Arg-150 to Asp-151, Arg-182, Arg-188, Arg-253 to Arg-256, and Lys-322. Residues Asp-389, His-393, Asp-430, His-431, and His-449 each coordinate Mn(2+).

The protein belongs to the BPG-independent phosphoglycerate mutase family. Monomer. The cofactor is Mn(2+).

It catalyses the reaction (2R)-2-phosphoglycerate = (2R)-3-phosphoglycerate. It participates in carbohydrate degradation; glycolysis; pyruvate from D-glyceraldehyde 3-phosphate: step 3/5. In terms of biological role, catalyzes the interconversion of 2-phosphoglycerate and 3-phosphoglycerate. This chain is 2,3-bisphosphoglycerate-independent phosphoglycerate mutase, found in Ehrlichia ruminantium (strain Gardel).